A 335-amino-acid polypeptide reads, in one-letter code: DNA-directed RNA polymerase subunit alpha (335 aa).

The tract at residues 1-231 is alpha N-terminal domain (alpha-NTD); it reads MVREKITVST…DLLIPFLHTK (231 aa). Residues 263 to 335 form an alpha C-terminal domain (alpha-CTD) region; the sequence is KKMALKSIFI…FVIDLPKNKF (73 aa).

Belongs to the RNA polymerase alpha chain family. In plastids the minimal PEP RNA polymerase catalytic core is composed of four subunits: alpha, beta, beta', and beta''. When a (nuclear-encoded) sigma factor is associated with the core the holoenzyme is formed, which can initiate transcription.

Its subcellular location is the plastid. The protein localises to the chloroplast. The enzyme catalyses RNA(n) + a ribonucleoside 5'-triphosphate = RNA(n+1) + diphosphate. Functionally, DNA-dependent RNA polymerase catalyzes the transcription of DNA into RNA using the four ribonucleoside triphosphates as substrates. The sequence is that of DNA-directed RNA polymerase subunit alpha from Helianthus annuus (Common sunflower).